Consider the following 339-residue polypeptide: DNA-directed RNA polymerase subunit alpha (339 aa).

An alpha N-terminal domain (alpha-NTD) region spans residues 1–233; the sequence is MVREEVAGST…DLFLPFLHAE (233 aa). Residues 266-339 are alpha C-terminal domain (alpha-CTD); the sequence is GIPLNCIFID…IDLLKNKLSF (74 aa).

Belongs to the RNA polymerase alpha chain family. As to quaternary structure, in plastids the minimal PEP RNA polymerase catalytic core is composed of four subunits: alpha, beta, beta', and beta''. When a (nuclear-encoded) sigma factor is associated with the core the holoenzyme is formed, which can initiate transcription.

It is found in the plastid. The protein resides in the chloroplast. The enzyme catalyses RNA(n) + a ribonucleoside 5'-triphosphate = RNA(n+1) + diphosphate. DNA-dependent RNA polymerase catalyzes the transcription of DNA into RNA using the four ribonucleoside triphosphates as substrates. This is DNA-directed RNA polymerase subunit alpha from Hordeum bulbosum (Bulbous barley).